Reading from the N-terminus, the 405-residue chain is Protein NDRG4 (405 aa).

Positions 352–405 (AGAVPSASMTRLARSRTASLTSASSVDGARPRPCTQSESSDGIGQINHTMEVSC) are disordered. Residues 361–376 (TRLARSRTASLTSASS) are compositionally biased toward low complexity. Over residues 385-405 (CTQSESSDGIGQINHTMEVSC) the composition is skewed to polar residues.

The protein belongs to the NDRG family.

Its subcellular location is the cytoplasm. It localises to the cytosol. Functionally, contributes to the maintenance of intracerebral BDNF levels within the normal range. May enhance growth factor-induced ERK1 and ERK2 phosphorylation. May attenuate growth factor-promoted ELK1 phosphorylation in a microtubule-dependent manner. This chain is Protein NDRG4, found in Xenopus tropicalis (Western clawed frog).